Reading from the N-terminus, the 317-residue chain is Methionyl-tRNA formyltransferase (317 aa).

A (6S)-5,6,7,8-tetrahydrofolate-binding site is contributed by 111 to 114 (SLLP).

The protein belongs to the Fmt family.

It carries out the reaction L-methionyl-tRNA(fMet) + (6R)-10-formyltetrahydrofolate = N-formyl-L-methionyl-tRNA(fMet) + (6S)-5,6,7,8-tetrahydrofolate + H(+). Attaches a formyl group to the free amino group of methionyl-tRNA(fMet). The formyl group appears to play a dual role in the initiator identity of N-formylmethionyl-tRNA by promoting its recognition by IF2 and preventing the misappropriation of this tRNA by the elongation apparatus. The polypeptide is Methionyl-tRNA formyltransferase (Chlorobium phaeobacteroides (strain BS1)).